Consider the following 289-residue polypeptide: Pantoate kinase (289 aa).

The protein belongs to the GHMP kinase family. PoK subfamily.

It catalyses the reaction (R)-pantoate + ATP = (R)-4-phosphopantoate + ADP + H(+). The protein operates within cofactor biosynthesis; coenzyme A biosynthesis. Phosphorylates (R)-pantoate to form (R)-4-phosphopantoate in the CoA biosynthesis pathway. ATP is the best phosphate donor. Can be replaced with UTP, with lower efficiency. The protein is Pantoate kinase of Methanospirillum hungatei JF-1 (strain ATCC 27890 / DSM 864 / NBRC 100397 / JF-1).